The primary structure comprises 130 residues: DNA-directed RNA polymerase subunit omega (130 aa).

The disordered stretch occupies residues 109-130 (EEELLKGLEGLAPPEEQPEEDE).

The protein belongs to the RNA polymerase subunit omega family. As to quaternary structure, the RNAP catalytic core consists of 2 alpha, 1 beta, 1 beta' and 1 omega subunit. When a sigma factor is associated with the core the holoenzyme is formed, which can initiate transcription.

The catalysed reaction is RNA(n) + a ribonucleoside 5'-triphosphate = RNA(n+1) + diphosphate. Promotes RNA polymerase assembly. Latches the N- and C-terminal regions of the beta' subunit thereby facilitating its interaction with the beta and alpha subunits. This chain is DNA-directed RNA polymerase subunit omega, found in Rhodopseudomonas palustris (strain BisB5).